The chain runs to 868 residues: Leucine--tRNA ligase (868 aa).

Residues 42-52 (PYPSGKLHMGH) carry the 'HIGH' region motif. The 'KMSKS' region motif lies at 627–631 (KMSKS). Lys630 contacts ATP.

Belongs to the class-I aminoacyl-tRNA synthetase family.

It is found in the cytoplasm. It catalyses the reaction tRNA(Leu) + L-leucine + ATP = L-leucyl-tRNA(Leu) + AMP + diphosphate. The polypeptide is Leucine--tRNA ligase (Pseudomonas putida (strain ATCC 47054 / DSM 6125 / CFBP 8728 / NCIMB 11950 / KT2440)).